The following is a 457-amino-acid chain: Bifunctional protein GlmU (457 aa).

Residues 1–229 (MDLAAVILAA…PVEVTGINDR (229 aa)) are pyrophosphorylase. UDP-N-acetyl-alpha-D-glucosamine-binding positions include 8–11 (LAAG), K22, Q72, and 77–78 (GT). Residue D102 coordinates Mg(2+). Positions 139, 154, 169, and 227 each coordinate UDP-N-acetyl-alpha-D-glucosamine. A Mg(2+)-binding site is contributed by N227. The interval 230–250 (RQLAEVEKYLRRRVLEDLMQS) is linker. Positions 251-457 (GVTVLDPAST…WAAKKRDKKV (207 aa)) are N-acetyltransferase. UDP-N-acetyl-alpha-D-glucosamine-binding residues include R332 and K350. H362 functions as the Proton acceptor in the catalytic mechanism. UDP-N-acetyl-alpha-D-glucosamine is bound by residues Y365 and N376. Acetyl-CoA is bound by residues 385-386 (NY), S404, A422, and R439.

The protein in the N-terminal section; belongs to the N-acetylglucosamine-1-phosphate uridyltransferase family. This sequence in the C-terminal section; belongs to the transferase hexapeptide repeat family. In terms of assembly, homotrimer. Mg(2+) serves as cofactor.

It is found in the cytoplasm. It carries out the reaction alpha-D-glucosamine 1-phosphate + acetyl-CoA = N-acetyl-alpha-D-glucosamine 1-phosphate + CoA + H(+). It catalyses the reaction N-acetyl-alpha-D-glucosamine 1-phosphate + UTP + H(+) = UDP-N-acetyl-alpha-D-glucosamine + diphosphate. It functions in the pathway nucleotide-sugar biosynthesis; UDP-N-acetyl-alpha-D-glucosamine biosynthesis; N-acetyl-alpha-D-glucosamine 1-phosphate from alpha-D-glucosamine 6-phosphate (route II): step 2/2. It participates in nucleotide-sugar biosynthesis; UDP-N-acetyl-alpha-D-glucosamine biosynthesis; UDP-N-acetyl-alpha-D-glucosamine from N-acetyl-alpha-D-glucosamine 1-phosphate: step 1/1. The protein operates within bacterial outer membrane biogenesis; LPS lipid A biosynthesis. Its function is as follows. Catalyzes the last two sequential reactions in the de novo biosynthetic pathway for UDP-N-acetylglucosamine (UDP-GlcNAc). The C-terminal domain catalyzes the transfer of acetyl group from acetyl coenzyme A to glucosamine-1-phosphate (GlcN-1-P) to produce N-acetylglucosamine-1-phosphate (GlcNAc-1-P), which is converted into UDP-GlcNAc by the transfer of uridine 5-monophosphate (from uridine 5-triphosphate), a reaction catalyzed by the N-terminal domain. The polypeptide is Bifunctional protein GlmU (Pelotomaculum thermopropionicum (strain DSM 13744 / JCM 10971 / SI)).